Consider the following 147-residue polypeptide: Signal peptidase complex subunit 3 (147 aa).

Residues 1 to 6 (MHSWVQ) are Cytoplasmic-facing. The helical; Signal-anchor for type II membrane protein transmembrane segment at 7 to 29 (RLLTTATTAALLLLAACCAASAL) threads the bilayer. Topologically, residues 30 to 147 (DAFHVPSVQA…EFNLPDSYTS (118 aa)) are lumenal.

Belongs to the SPCS3 family. Component of the signal peptidase complex (SPC) composed of a catalytic subunit SEC11 and three accessory subunits SPCS1, SPCS2 and SPCS3. The complex induces a local thinning of the ER membrane which is used to measure the length of the signal peptide (SP) h-region of protein substrates. This ensures the selectivity of the complex towards h-regions shorter than 18-20 amino acids.

It localises to the endoplasmic reticulum membrane. In terms of biological role, essential component of the signal peptidase complex (SPC) which catalyzes the cleavage of N-terminal signal sequences from nascent proteins as they are translocated into the lumen of the endoplasmic reticulum. Essential for the SPC catalytic activity, possibly by stabilizing and positioning the active center of the complex close to the lumenal surface. The chain is Signal peptidase complex subunit 3 from Oryza sativa subsp. japonica (Rice).